The sequence spans 101 residues: NADH-quinone oxidoreductase subunit K (101 aa).

Helical transmembrane passes span 4–24 (LAHY…GIFL), 30–50 (IIIL…FVAF), and 61–81 (IFVF…LAIL).

The protein belongs to the complex I subunit 4L family. As to quaternary structure, NDH-1 is composed of 14 different subunits. Subunits NuoA, H, J, K, L, M, N constitute the membrane sector of the complex.

Its subcellular location is the cell inner membrane. The catalysed reaction is a quinone + NADH + 5 H(+)(in) = a quinol + NAD(+) + 4 H(+)(out). Functionally, NDH-1 shuttles electrons from NADH, via FMN and iron-sulfur (Fe-S) centers, to quinones in the respiratory chain. The immediate electron acceptor for the enzyme in this species is believed to be ubiquinone. Couples the redox reaction to proton translocation (for every two electrons transferred, four hydrogen ions are translocated across the cytoplasmic membrane), and thus conserves the redox energy in a proton gradient. This chain is NADH-quinone oxidoreductase subunit K, found in Paraburkholderia phymatum (strain DSM 17167 / CIP 108236 / LMG 21445 / STM815) (Burkholderia phymatum).